Reading from the N-terminus, the 838-residue chain is Phosphatidylethanolamine N-methyltransferase 1 (838 aa).

Residues 1–48 are Lumenal-facing; sequence MATEIITEKKEIVARTRSSGITFNPPVTHDMVRSLFDPTIKKSFLECC. A helical membrane pass occupies residues 49 to 69; it reads ITLTILANFVLCYYLINWFGL. The Cytoplasmic segment spans residues 70–73; sequence SQAK. Residues 74-94 form a helical membrane-spanning segment; sequence LIFLIQYVYWRLAYNLGIGII. The Lumenal segment spans residues 95 to 157; it reads LHYQSHYESL…ELNCWLLFRQ (63 aa). Residues 158–178 traverse the membrane as a helical segment; that stretch reads FVDLILMQDFTTYIIYVYLSL. Residues 179–184 are Cytoplasmic-facing; the sequence is PTDVSS. The helical transmembrane segment at 185-205 threads the bilayer; sequence LINWKSLIGIAMILFNIWVKI. At 206 to 236 the chain is on the lumenal side; the sequence is DAHRVVKDYAWYWGDFFFLQDAELTFDGVFN. The chain crosses the membrane as a helical span at residues 237-257; it reads ISPHPMYSIGYLGYYGLSLIC. Over 258–261 the chain is Cytoplasmic; the sequence is GDYR. A helical membrane pass occupies residues 262-282; the sequence is VLLVSVGGHFLQFLFLKYVES. The Lumenal portion of the chain corresponds to 283–328; the sequence is PHIERTYGSDSPSNSTQHQIDDLIAKENYDYSRPLINTGILFENFQ. A helical transmembrane segment spans residues 329-349; that stretch reads FLRFSDYFTVSTILVLFSWFF. Residues 350-356 are Cytoplasmic-facing; it reads TSKPSNN. Residues 357–377 form a helical membrane-spanning segment; sequence FLFVLTLLTKLTTWLLTSWIL. Residues 378-403 are Lumenal-facing; the sequence is FQQSNRKWFTRLFLKNGYTQIYSYQQ. Residues 404–424 traverse the membrane as a helical segment; the sequence is WQFLYNYSLIVTNTLLFLHTL. Over 425–435 the chain is Cytoplasmic; that stretch reads SELYSIQSSDG. Residues 436 to 456 form a helical membrane-spanning segment; that stretch reads LNNSHVIFGLLLCAIQIWCNV. Residues 457–517 lie on the Lumenal side of the membrane; that stretch reads ETRDAISDFG…VLMTNFSKTN (61 aa). A helical transmembrane segment spans residues 518–538; it reads VTLAVLWTVTNLIFVKLIEEP. Topologically, residues 539–838 are cytoplasmic; sequence HVSKVYGNGT…DIKEVLDSLN (300 aa).

Belongs to the class VI-like SAM-binding methyltransferase superfamily. CHO2 family.

The protein resides in the endoplasmic reticulum membrane. The enzyme catalyses a 1,2-diacyl-sn-glycero-3-phosphoethanolamine + S-adenosyl-L-methionine = a 1,2-diacyl-sn-glycero-3-phospho-N-methylethanolamine + S-adenosyl-L-homocysteine + H(+). It functions in the pathway phospholipid metabolism; phosphatidylcholine biosynthesis. Functionally, catalyzes the first step of the methylation pathway of phosphatidylcholine biosynthesis, the SAM-dependent methylation of phosphatidylethanolamine (PE) to phosphatidylmonomethylethanolamine (PMME). The sequence is that of Phosphatidylethanolamine N-methyltransferase 1 (CHO2-1) from Vanderwaltozyma polyspora (strain ATCC 22028 / DSM 70294 / BCRC 21397 / CBS 2163 / NBRC 10782 / NRRL Y-8283 / UCD 57-17) (Kluyveromyces polysporus).